Consider the following 1403-residue polypeptide: Baculoviral IAP repeat-containing protein 1f (1403 aa).

BIR repeat units follow at residues 60-127 (EAKR…CEFL), 159-227 (EEAR…CEFL), and 278-345 (EELR…CVFL). The Zn(2+) site is built by Cys-315, Cys-318, His-335, and Cys-342. The NACHT domain maps to 464–759 (SVMCVEGEAG…EFLAAVRLTE (296 aa)). 473–478 (GSGKTT) contacts ATP.

As to quaternary structure, component of the NLRC4 inflammasome, at least composed of NLRC4, caspase-1 (CASP1) and some NAIP protein. In terms of assembly, (Microbial infection) Interacts with S.typhimurium (Salmonella) flagellin.

In terms of biological role, sensor component of the NLRC4 inflammasome that specifically recognizes and binds flagellin from pathogenic bacteria. Association of pathogenic bacteria proteins drives in turn drive assembly and activation of the NLRC4 inflammasome, promoting caspase-1 activation, cytokine production and macrophage pyroptosis. The NLRC4 inflammasome is activated as part of the innate immune response to a range of intracellular bacteria. The NLRC4 inflammasome senses Gram-negative bacteria such as L.pneumophila and P.aeruginosa, enteric pathogens S.typhimurium (Salmonella) and S.flexneri. May contribute to prevent motor-neuron apoptosis induced by a variety of signals. This chain is Baculoviral IAP repeat-containing protein 1f (Naip6), found in Mus musculus (Mouse).